A 426-amino-acid chain; its full sequence is Gamma-glutamyl phosphate reductase (426 aa).

This sequence belongs to the gamma-glutamyl phosphate reductase family.

The protein resides in the cytoplasm. The catalysed reaction is L-glutamate 5-semialdehyde + phosphate + NADP(+) = L-glutamyl 5-phosphate + NADPH + H(+). It participates in amino-acid biosynthesis; L-proline biosynthesis; L-glutamate 5-semialdehyde from L-glutamate: step 2/2. Functionally, catalyzes the NADPH-dependent reduction of L-glutamate 5-phosphate into L-glutamate 5-semialdehyde and phosphate. The product spontaneously undergoes cyclization to form 1-pyrroline-5-carboxylate. This chain is Gamma-glutamyl phosphate reductase, found in Ralstonia pickettii (strain 12J).